Here is a 347-residue protein sequence, read N- to C-terminus: Protein N-terminal asparagine amidohydrolase (347 aa).

The catalysed reaction is N-terminal L-asparaginyl-[protein] + H2O + H(+) = N-terminal L-aspartyl-[protein] + NH4(+). In terms of biological role, N-terminal asparagine deamidase that mediates deamidation of N-terminal asparagine residues to aspartate. Required for the ubiquitin-dependent turnover of intracellular proteins that initiate with Met-Asn. These proteins are acetylated on the retained initiator methionine and can subsequently be modified by the removal of N-acetyl methionine by acylaminoacid hydrolase (AAH). Conversion of the resulting N-terminal asparagine to aspartate by NTAN1 renders the protein susceptible to arginylation, polyubiquitination and degradation as specified by the N-end rule. This enzyme does not act on substrates with internal or C-terminal asparagines and does not act on glutamine residues in any position. Does not seem to be involved in immune response, unlike the N-terminal glutamine amidohydrolase NTAQ1. The polypeptide is Protein N-terminal asparagine amidohydrolase (Arabidopsis thaliana (Mouse-ear cress)).